A 364-amino-acid polypeptide reads, in one-letter code: Protein FAM81A (364 aa).

The stretch at 80–107 (IRNITAIVKQLNRDIEVLQEQIRARDNI) forms a coiled coil. Residues 275–300 (ARLDKIEESQRRNAEGQRKPEEEKVH) are compositionally biased toward basic and acidic residues. Residues 275 to 301 (ARLDKIEESQRRNAEGQRKPEEEKVHG) are disordered.

Belongs to the FAM81 family. In terms of assembly, interacts with DLG4/PSD-95, GRIN2B/GLUN2B and SYNGAP1; the interactions facilitate condensate formation. In terms of tissue distribution, highly expressed in brain (at protein level).

It is found in the postsynaptic density. The protein localises to the cytoplasm. Functionally, facilitates the interaction and assembly of proteins within the postsynaptic density by promoting the condensation of postsynaptic proteins via liquid-liquid phase separation. Required for neuronal activity. Accumulation at the postsynaptic density results in enlargement of dendritic spines. This Rattus norvegicus (Rat) protein is Protein FAM81A.